A 279-amino-acid chain; its full sequence is Pantothenate synthetase (279 aa).

26 to 33 (MGNLHEGH) provides a ligand contact to ATP. Catalysis depends on H33, which acts as the Proton donor. Position 57 (Q57) interacts with (R)-pantoate. Q57 provides a ligand contact to beta-alanine. 144 to 147 (GKKD) provides a ligand contact to ATP. Q150 contacts (R)-pantoate. Residues V173 and 181-184 (LSSR) each bind ATP.

It belongs to the pantothenate synthetase family. In terms of assembly, homodimer.

The protein resides in the cytoplasm. It catalyses the reaction (R)-pantoate + beta-alanine + ATP = (R)-pantothenate + AMP + diphosphate + H(+). The protein operates within cofactor biosynthesis; (R)-pantothenate biosynthesis; (R)-pantothenate from (R)-pantoate and beta-alanine: step 1/1. Catalyzes the condensation of pantoate with beta-alanine in an ATP-dependent reaction via a pantoyl-adenylate intermediate. The chain is Pantothenate synthetase from Burkholderia thailandensis (strain ATCC 700388 / DSM 13276 / CCUG 48851 / CIP 106301 / E264).